Reading from the N-terminus, the 175-residue chain is Archaemetzincin (175 aa).

Position 125 (histidine 125) interacts with Zn(2+). Glutamate 126 serves as the catalytic Proton acceptor. Positions 129, 135, 136, 141, 160, and 163 each coordinate Zn(2+).

Belongs to the peptidase M54 family. In terms of assembly, monomer. Requires Zn(2+) as cofactor.

Functionally, probable zinc metalloprotease whose natural substrate is unknown. Does not show endo- or exopeptidase activity against resorufin labeled casein, p-nitroanilide (pNA), amidomethylcoumarin (AMC) (one to three amino acids in length), and hippuryl-aminoacid substrates. The sequence is that of Archaemetzincin from Methanopyrus kandleri (strain AV19 / DSM 6324 / JCM 9639 / NBRC 100938).